The sequence spans 208 residues: Uracil phosphoribosyltransferase (208 aa).

5-phospho-alpha-D-ribose 1-diphosphate is bound by residues Arg78, Arg103, and 130-138 (DPMLATGGS). Residues Ile193 and 198–200 (GDA) each bind uracil. Asp199 contacts 5-phospho-alpha-D-ribose 1-diphosphate.

The protein belongs to the UPRTase family. Requires Mg(2+) as cofactor.

It catalyses the reaction UMP + diphosphate = 5-phospho-alpha-D-ribose 1-diphosphate + uracil. The protein operates within pyrimidine metabolism; UMP biosynthesis via salvage pathway; UMP from uracil: step 1/1. With respect to regulation, allosterically activated by GTP. Its function is as follows. Catalyzes the conversion of uracil and 5-phospho-alpha-D-ribose 1-diphosphate (PRPP) to UMP and diphosphate. The polypeptide is Uracil phosphoribosyltransferase (Haemophilus ducreyi (strain 35000HP / ATCC 700724)).